The chain runs to 509 residues: Scavenger receptor class B member 1 (509 aa).

Residues Met-1–Ala-11 are Cytoplasmic-facing. Residues Val-12–Met-32 form a helical membrane-spanning segment. Residues Pro-33–Val-440 are Extracellular-facing. N-linked (GlcNAc...) asparagine glycans are attached at residues Asn-102, Asn-108, Asn-173, Asn-212, Asn-227, Asn-255, Asn-310, Asn-330, and Asn-383. Cys-251 and Cys-384 are disulfide-bonded. Residues Leu-441–Ile-461 form a helical membrane-spanning segment. The Cytoplasmic portion of the chain corresponds to Tyr-462 to Leu-509.

The protein belongs to the CD36 family. N-glycosylated. Post-translationally, the six cysteines of the extracellular domain are all involved in intramolecular disulfide bonds.

The protein resides in the cell membrane. Its subcellular location is the membrane. It is found in the caveola. Functionally, receptor for different ligands such as phospholipids, cholesterol ester, lipoproteins, phosphatidylserine and apoptotic cells. Receptor for HDL, mediating selective uptake of cholesteryl ether and HDL-dependent cholesterol efflux. Also facilitates the flux of free and esterified cholesterol between the cell surface and apoB-containing lipoproteins and modified lipoproteins, although less efficiently than HDL. May be involved in the phagocytosis of apoptotic cells, via its phosphatidylserine binding activity. The polypeptide is Scavenger receptor class B member 1 (SCARB1) (Cricetulus griseus (Chinese hamster)).